The chain runs to 244 residues: tRNA (guanine-N(1)-)-methyltransferase (244 aa).

Residues G112 and 131–136 (IGDFIV) each bind S-adenosyl-L-methionine.

It belongs to the RNA methyltransferase TrmD family. Homodimer.

The protein resides in the cytoplasm. The enzyme catalyses guanosine(37) in tRNA + S-adenosyl-L-methionine = N(1)-methylguanosine(37) in tRNA + S-adenosyl-L-homocysteine + H(+). In terms of biological role, specifically methylates guanosine-37 in various tRNAs. The chain is tRNA (guanine-N(1)-)-methyltransferase from Clostridium kluyveri (strain NBRC 12016).